Consider the following 318-residue polypeptide: NADH-ubiquinone oxidoreductase chain 1 (318 aa).

8 helical membrane passes run 3-23 (TMNL…LTLV), 69-89 (ILYI…WTPL), 98-118 (FNLG…SILW), 135-155 (AVAQ…SILL), 171-191 (HLWL…STLA), 217-237 (AGPF…MNAL), 253-273 (ELFT…FLWI), and 294-314 (LPLT…ISSI).

Belongs to the complex I subunit 1 family. As to quaternary structure, core subunit of respiratory chain NADH dehydrogenase (Complex I) which is composed of 45 different subunits.

It is found in the mitochondrion inner membrane. It catalyses the reaction a ubiquinone + NADH + 5 H(+)(in) = a ubiquinol + NAD(+) + 4 H(+)(out). Functionally, core subunit of the mitochondrial membrane respiratory chain NADH dehydrogenase (Complex I) which catalyzes electron transfer from NADH through the respiratory chain, using ubiquinone as an electron acceptor. Essential for the catalytic activity and assembly of complex I. The protein is NADH-ubiquinone oxidoreductase chain 1 (MT-ND1) of Papio hamadryas (Hamadryas baboon).